The following is a 161-amino-acid chain: Phosphopantetheine adenylyltransferase (161 aa).

S11 is a binding site for substrate. ATP is bound by residues 11-12 (SF) and H19. The substrate site is built by K43, L75, and R89. ATP is bound by residues 90–92 (GLR), E100, and 125–131 (YSFISSS).

Belongs to the bacterial CoaD family. As to quaternary structure, homohexamer. It depends on Mg(2+) as a cofactor.

It is found in the cytoplasm. It carries out the reaction (R)-4'-phosphopantetheine + ATP + H(+) = 3'-dephospho-CoA + diphosphate. The protein operates within cofactor biosynthesis; coenzyme A biosynthesis; CoA from (R)-pantothenate: step 4/5. Reversibly transfers an adenylyl group from ATP to 4'-phosphopantetheine, yielding dephospho-CoA (dPCoA) and pyrophosphate. The polypeptide is Phosphopantetheine adenylyltransferase (Staphylococcus saprophyticus subsp. saprophyticus (strain ATCC 15305 / DSM 20229 / NCIMB 8711 / NCTC 7292 / S-41)).